Consider the following 68-residue polypeptide: ATP synthase subunit c (68 aa).

A run of 2 helical transmembrane segments spans residues 4-24 and 45-65; these read IAAA…NGLI and IMFI…VIAF.

This sequence belongs to the ATPase C chain family. F-type ATPases have 2 components, F(1) - the catalytic core - and F(0) - the membrane proton channel. F(1) has five subunits: alpha(3), beta(3), gamma(1), delta(1), epsilon(1). F(0) has three main subunits: a(1), b(2) and c(10-14). The alpha and beta chains form an alternating ring which encloses part of the gamma chain. F(1) is attached to F(0) by a central stalk formed by the gamma and epsilon chains, while a peripheral stalk is formed by the delta and b chains.

It localises to the cell membrane. Functionally, f(1)F(0) ATP synthase produces ATP from ADP in the presence of a proton or sodium gradient. F-type ATPases consist of two structural domains, F(1) containing the extramembraneous catalytic core and F(0) containing the membrane proton channel, linked together by a central stalk and a peripheral stalk. During catalysis, ATP synthesis in the catalytic domain of F(1) is coupled via a rotary mechanism of the central stalk subunits to proton translocation. Key component of the F(0) channel; it plays a direct role in translocation across the membrane. A homomeric c-ring of between 10-14 subunits forms the central stalk rotor element with the F(1) delta and epsilon subunits. This is ATP synthase subunit c from Staphylococcus saprophyticus subsp. saprophyticus (strain ATCC 15305 / DSM 20229 / NCIMB 8711 / NCTC 7292 / S-41).